Consider the following 266-residue polypeptide: uncharacterized protein (266 aa).

The helical transmembrane segment at 13–33 (IIGLMLIIFAGILFYAYILQH) threads the bilayer.

The protein belongs to the LicD transferase family.

It is found in the membrane. This is an uncharacterized protein from Rickettsia prowazekii (strain Madrid E).